Consider the following 745-residue polypeptide: AP-3 complex subunit beta (745 aa).

Ser-638 carries the phosphoserine modification. Residues 674–745 (YASETSESSE…TEPEPNYWQS (72 aa)) are disordered. Residues 680–718 (ESSEGEYETSTSESEDEETDDTSQEEDNEKNSTPDEDTE) are compositionally biased toward acidic residues.

Belongs to the adaptor complexes large subunit family. Adaptor protein complex 3 (AP-3) is a heterotetramer composed of 2 large adaptins (apl5 and apl6), a medium adaptin (apm3) and a small adaptin (aps3).

The protein resides in the golgi apparatus. The protein localises to the cytoplasmic vesicle. It is found in the clathrin-coated vesicle membrane. Its function is as follows. Adaptins are components of the adaptor complexes which link clathrin to receptors in coated vesicles. Clathrin-associated protein complexes are believed to interact with the cytoplasmic tails of membrane proteins, leading to their selection and concentration. Beta adaptin is a subunit of the plasma membrane adaptor. The polypeptide is AP-3 complex subunit beta (apl6) (Schizosaccharomyces pombe (strain 972 / ATCC 24843) (Fission yeast)).